The chain runs to 700 residues: Glutamine synthetase (700 aa).

Residues 65 to 155 (YHFTPPGSSP…LPTAFCSYGG (91 aa)) form the GS beta-grasp domain. One can recognise a GS catalytic domain in the interval 159-589 (DRDSLLRSME…TMQEMIRKDL (431 aa)). Residues Glu196, Glu198, Glu267, and Glu274 each contribute to the Mg(2+) site. Residues 318–319 (NG) and Gly319 contribute to the L-glutamate site. His323 lines the Mg(2+) pocket. Positions 327 and 435 each coordinate ATP. Residue Arg435 participates in L-glutamate binding. Glu472 is a binding site for Mg(2+).

Belongs to the glutamine synthetase family. Homohexamer. The cofactor is Mg(2+).

The protein resides in the cytoplasm. The enzyme catalyses L-glutamate + NH4(+) + ATP = L-glutamine + ADP + phosphate + H(+). The activity of this enzyme is not controlled by adenylation. In terms of biological role, catalyzes the ATP-dependent biosynthesis of glutamine from glutamate and ammonia. The protein is Glutamine synthetase of Butyrivibrio fibrisolvens.